The following is a 464-amino-acid chain: Interstitial collagenase A (464 aa).

Residues 1 to 17 (MPSLPLLLLLWAASSYS) form the signal peptide. Positions 18 to 96 (FPVFHNGDRQ…PRCGVPDVAP (79 aa)) are cleaved as a propeptide — activation peptide. The Cysteine switch motif lies at 87-94 (PRCGVPDV). Cysteine 89 provides a ligand contact to Zn(2+). The metalloprotease stretch occupies residues 95-274 (APYAITHNNP…IQPTGATTPH (180 aa)). Aspartate 155 is a binding site for Ca(2+). Histidine 165 and aspartate 167 together coordinate Zn(2+). Residues aspartate 172 and glycine 173 each contribute to the Ca(2+) site. Histidine 180 serves as a coordination point for Zn(2+). 3 residues coordinate Ca(2+): glycine 187, glycine 189, and aspartate 191. Histidine 193 serves as a coordination point for Zn(2+). 2 residues coordinate Ca(2+): aspartate 195 and glutamate 198. N-linked (GlcNAc...) asparagine glycosylation occurs at asparagine 202. Residue histidine 215 participates in Zn(2+) binding. Residue glutamate 216 is part of the active site. Residues histidine 219 and histidine 225 each coordinate Zn(2+). 2 Hemopexin repeats span residues 273-322 (PHPC…WPNL) and 323-369 (PVKL…FGFP). Cysteine 276 and cysteine 464 form a disulfide bridge. A Ca(2+)-binding site is contributed by aspartate 283. Asparagine 371 is a glycosylation site (N-linked (GlcNAc...) asparagine). Hemopexin repeat units follow at residues 372-420 (VTHI…FPGI) and 421-464 (DDKV…WFNC). Residues aspartate 376 and aspartate 425 each contribute to the Ca(2+) site.

Belongs to the peptidase M10A family. It depends on Ca(2+) as a cofactor. Zn(2+) serves as cofactor.

It localises to the secreted. The protein localises to the extracellular space. It is found in the extracellular matrix. The catalysed reaction is Cleavage of the triple helix of collagen at about three-quarters of the length of the molecule from the N-terminus, at 775-Gly-|-Ile-776 in the alpha1(I) chain. Cleaves synthetic substrates and alpha-macroglobulins at bonds where P1' is a hydrophobic residue.. Its activity is regulated as follows. Can be activated without removal of the activation peptide. Its function is as follows. Cleaves collagens of types I, II, and III at one site in the helical domain. Also cleaves collagens of types VII and X. Able to degrade synthetic peptides and type I and II fibrillar collagen. In Mus musculus (Mouse), this protein is Interstitial collagenase A (Mmp1a).